The chain runs to 590 residues: DEAD-box ATP-dependent RNA helicase 27 (590 aa).

The tract at residues 1–92 is disordered; that stretch reads MAPAPATTSS…EKGNEGGSGI (92 aa). The segment covering 27–62 has biased composition (acidic residues); that stretch reads SDSESEELSYDTAAADEEEGEEEAPNQMEELEEEQE. Residues 40-87 are a coiled coil; sequence AADEEEGEEEAPNQMEELEEEQEEEKKEKKQKKEMSKEKKRKKEKGNE. The span at 63 to 76 shows a compositional bias: basic and acidic residues; the sequence is EEKKEKKQKKEMSK. The Q motif signature appears at 96 to 124; the sequence is MLFSELGVSEPTARAIREMNYTYLTQIQA. The Helicase ATP-binding domain occupies 127–302; sequence IPHLLNGKDV…KLSFEKNEES (176 aa). Position 140-147 (140-147) interacts with ATP; sequence AKTGSGKT. Residues 250-253 carry the DEAD box motif; sequence DEAD. The Helicase C-terminal domain occupies 335–488; that stretch reads RFLVLYAFLK…NKVPNLQSHL (154 aa). The interval 551-590 is disordered; the sequence is SASKHRRKMRKVDGGRRHGISAANPYGRKGGDDKRQFARF. Residues 579–590 are compositionally biased toward basic and acidic residues; that stretch reads KGGDDKRQFARF.

It belongs to the DEAD box helicase family. DDX18/HAS1 subfamily.

The enzyme catalyses ATP + H2O = ADP + phosphate + H(+). This is DEAD-box ATP-dependent RNA helicase 27 from Oryza sativa subsp. japonica (Rice).